Reading from the N-terminus, the 262-residue chain is Enoyl-[acyl-carrier-protein] reductase [NADH] FabI (262 aa).

Residues Gly-13, Ser-19 to Ile-20, Gln-40, Asp-64 to Val-65, and Ile-92 each bind NAD(+). Ala-95 contributes to the substrate binding site. Active-site proton acceptor residues include Tyr-146 and Tyr-156. Residues Lys-163 and Ile-192–Ala-196 each bind NAD(+).

It belongs to the short-chain dehydrogenases/reductases (SDR) family. FabI subfamily. Homotetramer.

It carries out the reaction a 2,3-saturated acyl-[ACP] + NAD(+) = a (2E)-enoyl-[ACP] + NADH + H(+). The enzyme catalyses (2E)-butenoyl-[ACP] + NADH + H(+) = butanoyl-[ACP] + NAD(+). It catalyses the reaction (2E)-decenoyl-[ACP] + NADH + H(+) = decanoyl-[ACP] + NAD(+). The catalysed reaction is (2E)-hexadecenoyl-[ACP] + NADH + H(+) = hexadecanoyl-[ACP] + NAD(+). It carries out the reaction (2E,9Z)-hexadecadienoyl-[ACP] + NADH + H(+) = (9Z)-hexadecenoyl-[ACP] + NAD(+). The enzyme catalyses (2E)-5-methylhexenoyl-[ACP] + NADH + H(+) = 5-methylhexanoyl-[ACP] + NAD(+). It participates in lipid metabolism; fatty acid biosynthesis. The protein operates within cofactor biosynthesis; biotin biosynthesis. With respect to regulation, inhibited by diazaborines, triclosan (5-chloro-2-2,4-dichlorophenoxyphenol), 1,4-disubstituted imidazoles, 1,4-benzodiazepine derivatives, naphthyridinone derivatives, luteolin and curcumin. The antibiotic diazaborine interferes with the activity by binding to the protein and NAD. In terms of biological role, catalyzes the reduction of a carbon-carbon double bond in an enoyl moiety that is covalently linked to an acyl carrier protein (ACP). Involved in the elongation cycle of fatty acid which are used in the lipid metabolism and in the biotin biosynthesis. This chain is Enoyl-[acyl-carrier-protein] reductase [NADH] FabI (fabI), found in Escherichia coli (strain K12).